A 98-amino-acid polypeptide reads, in one-letter code: DNA-binding protein Fis (98 aa).

The segment at residues 74–93 (QTRAALMMGINRGTLRKKLK) is a DNA-binding region (H-T-H motif).

It belongs to the transcriptional regulatory Fis family. In terms of assembly, homodimer.

Functionally, activates ribosomal RNA transcription. Plays a direct role in upstream activation of rRNA promoters. This is DNA-binding protein Fis from Photorhabdus laumondii subsp. laumondii (strain DSM 15139 / CIP 105565 / TT01) (Photorhabdus luminescens subsp. laumondii).